Here is a 323-residue protein sequence, read N- to C-terminus: Acetyl esterase (323 aa).

Positions 91–93 (HGG) match the Involved in the stabilization of the negatively charged intermediate by the formation of the oxyanion hole motif. Active-site residues include S165, D262, and H292.

Belongs to the 'GDXG' lipolytic enzyme family. In terms of assembly, homodimer. Interacts with MalT and MelA.

It localises to the cytoplasm. Displays esterase activity towards short chain fatty esters (acyl chain length of up to 8 carbons). Able to hydrolyze triacetylglycerol (triacetin) and tributyrylglycerol (tributyrin), but not trioleylglycerol (triolein) or cholesterol oleate. Negatively regulates MalT activity by antagonizing maltotriose binding. Inhibits MelA galactosidase activity. This chain is Acetyl esterase, found in Salmonella paratyphi A (strain ATCC 9150 / SARB42).